A 684-amino-acid chain; its full sequence is Pentatricopeptide repeat-containing protein At4g14850 (684 aa).

14 PPR repeats span residues 5-39, 41-71, 72-106, 107-141, 142-172, 173-207, 208-242, 243-277, 278-308, 309-343, 344-374, 375-409, 412-442, and 448-478; these read SADALGLLLKNAISASSMRLGRVVHARIVKTLDSP, PPFLANYLINMYSKLDHPESARLVLRLTPAR, NVVSWTSLISGLAQNGHFSTALVEFFEMRREGVVP, NDFTFPCAFKAVASLRLPVTGKQIHALAVKCGRIL, DVFVGCSAFDMYCKTRLRDDARKLFDEIPER, NLETWNAFISNSVTDGRPREAIEAFIEFRRIDGHP, NSITFCAFLNACSDWLHLNLGMQLHGLVLRSGFDT, DVSVCNGLIDFYGKCKQIRSSEIIFTEMGTKNAVS, WCSLVAAYVQNHEDEKASVLYLRSRKDIVET, SDFMISSVLSACAGMAGLELGRSIHAHAVKACVER, TIFVGSALVDMYGKCGCIEDSEQAFDEMPEK, NLVTRNSLIGGYAHQGQVDMALALFEEMAPRGCGP, NYMTFVSLLSACSRAGAVENGMKIFDSMRST, and GAEHYSCIVDMLGRAGMVERAYEFIKKMPIQ. The tract at residues 483–558 is type E motif; degenerate; the sequence is VWGALQNACR…GAGYSWITVK (76 aa). A type E(+) motif; degenerate region spans residues 559–589; that stretch reads NQVHAFQAKDRSHILNKEIQTTLAKLRNEME. The interval 590-684 is type DYW motif; sequence AAGYKPDLKL…DGICSCKDYW (95 aa).

The protein belongs to the PPR family. PCMP-H subfamily.

Its function is as follows. Acts as a regulatory factor of isoprenoid biosynthesis. Could bind RNA. The sequence is that of Pentatricopeptide repeat-containing protein At4g14850 (LOI1) from Arabidopsis thaliana (Mouse-ear cress).